Here is a 301-residue protein sequence, read N- to C-terminus: Lufaxin (301 aa).

An N-terminal signal peptide occupies residues 1–23 (MNSINFLSIVGLISFGFIVAVKC). 4 disulfide bridges follow: cysteine 52–cysteine 60, cysteine 78–cysteine 137, cysteine 102–cysteine 112, and cysteine 258–cysteine 265. N-linked (GlcNAc...) asparagine glycosylation occurs at asparagine 262.

Interacts with factor Xa. Associates with complement proconvertase C3b-B complex. In terms of tissue distribution, expressed in salivary glands.

It is found in the secreted. Functionally, sand fly salivary protein with antithrombotic, and anti-complement (alternative pathway) activities. Is a slow, tight, non-competitive, and reversible inhibitor of factor Xa (FXa, F10). Is specific for FXa (Kd=3.86 nM) and does not interact with non-activated FX, or all other enzymes tested. In addition, it blocks prothrombinase and increases both prothrombin time and activated partial thromboplastin time. It also prevents protease-activated receptor 2 (F2RL1, PAR2) activation by FXa. In vivo, it abrogates edema formation triggered by injection of FXa in the paw of mice. Moreover, it prevents FeCl(3)-induced carotid artery thrombus formation and prolongs activated partial thromboplastin time ex vivo, implying that it works as an anticoagulant in vivo. It also inhibits the early steps of the alternative pathway of complement by direct binding to the proconvertase C3b-B complex, by inhibiting activation of factor B and consequently the formation of the C3 convertase. The protein is Lufaxin of Lutzomyia longipalpis (Sand fly).